Here is a 248-residue protein sequence, read N- to C-terminus: MFDSKVAIVTGAAQGIGQAYAQALAREGASVVVADINADGAAAVAKQIVADGGTAIHVPVDVSDEDSAKAMVDRAVGAFGGIDYLVNNAAIYGGMKLDLLLTVPLDYYKKFMSVNHDGVLVCTRAVYKHMAKRGGGAIVNQSSTAAWLYSNFYGLAKVGVNGLTQQLARELGGMKIRINAIAPGPIDTEATRTVTPAELVKNMVQTIPLSRMGTPEDLVGMCLFLLSDSASWITGQIFNVDGGQIIRS.

An NADP(+)-binding site is contributed by Ile-8–Val-32. Ser-143 is a substrate binding site. The active-site Proton acceptor is the Tyr-153.

This sequence belongs to the short-chain dehydrogenases/reductases (SDR) family.

This is an uncharacterized protein from Mycobacterium tuberculosis (strain CDC 1551 / Oshkosh).